Consider the following 361-residue polypeptide: S-adenosylmethionine:tRNA ribosyltransferase-isomerase (361 aa).

Belongs to the QueA family. As to quaternary structure, monomer.

The protein resides in the cytoplasm. The catalysed reaction is 7-aminomethyl-7-carbaguanosine(34) in tRNA + S-adenosyl-L-methionine = epoxyqueuosine(34) in tRNA + adenine + L-methionine + 2 H(+). It functions in the pathway tRNA modification; tRNA-queuosine biosynthesis. Its function is as follows. Transfers and isomerizes the ribose moiety from AdoMet to the 7-aminomethyl group of 7-deazaguanine (preQ1-tRNA) to give epoxyqueuosine (oQ-tRNA). In Haemophilus ducreyi (strain 35000HP / ATCC 700724), this protein is S-adenosylmethionine:tRNA ribosyltransferase-isomerase.